Consider the following 33-residue polypeptide: Gastrin (33 aa).

2 positions are modified to pyrrolidone carboxylic acid: glutamine 1 and glutamine 18. Position 28 is a sulfotyrosine (tyrosine 28). Phenylalanine 33 carries the post-translational modification Phenylalanine amide.

It belongs to the gastrin/cholecystokinin family.

The protein localises to the secreted. Its function is as follows. Gastrin stimulates the stomach mucosa to produce and secrete hydrochloric acid and the pancreas to secrete its digestive enzymes. It also stimulates smooth muscle contraction and increases blood circulation and water secretion in the stomach and intestine. The protein is Gastrin (GAST) of Didelphis virginiana (North American opossum).